We begin with the raw amino-acid sequence, 557 residues long: Urocanate hydratase (557 aa).

NAD(+)-binding positions include 53–54, Gln131, 177–179, Glu197, Arg202, 243–244, 264–268, 274–275, and Tyr323; these read GG, GMG, NA, QTSAH, and YL. The active site involves Cys411. Gly493 provides a ligand contact to NAD(+).

It belongs to the urocanase family. It depends on NAD(+) as a cofactor.

The protein localises to the cytoplasm. It catalyses the reaction 4-imidazolone-5-propanoate = trans-urocanate + H2O. Its pathway is amino-acid degradation; L-histidine degradation into L-glutamate; N-formimidoyl-L-glutamate from L-histidine: step 2/3. Its function is as follows. Catalyzes the conversion of urocanate to 4-imidazolone-5-propionate. This chain is Urocanate hydratase, found in Pseudomonas entomophila (strain L48).